The chain runs to 84 residues: Small ribosomal subunit protein bS18 (84 aa).

Belongs to the bacterial ribosomal protein bS18 family. As to quaternary structure, part of the 30S ribosomal subunit. Forms a tight heterodimer with protein bS6.

Binds as a heterodimer with protein bS6 to the central domain of the 16S rRNA, where it helps stabilize the platform of the 30S subunit. The chain is Small ribosomal subunit protein bS18 from Mycoplasma mobile (strain ATCC 43663 / 163K / NCTC 11711) (Mesomycoplasma mobile).